The primary structure comprises 591 residues: Parathyroid hormone/parathyroid hormone-related peptide receptor (591 aa).

The first 26 residues, Met1–Val26, serve as a signal peptide directing secretion. Over Asp27–Gly188 the chain is Extracellular. 3 disulfides stabilise this stretch: Cys48-Cys117, Cys108-Cys148, and Cys131-Cys170. The disordered stretch occupies residues Lys67–Arg104. The span at Glu81–Asp96 shows a compositional bias: basic and acidic residues. Residues Asn151, Asn161, Asn166, and Asn176 are each glycosylated (N-linked (GlcNAc...) asparagine). Residues Met189–Phe212 form a helical membrane-spanning segment. Residues Arg213–Arg219 lie on the Cytoplasmic side of the membrane. The helical transmembrane segment at Asn220 to Val239 threads the bilayer. Residues Lys240 to Arg282 are Extracellular-facing. The helical transmembrane segment at Val283–Leu306 threads the bilayer. The Cytoplasmic portion of the chain corresponds to His307–Tyr320. Residues Leu321–Val342 form a helical membrane-spanning segment. Residues Arg343 to Trp361 lie on the Extracellular side of the membrane. A helical transmembrane segment spans residues Ile362–Ile382. Over Arg383 to Ser409 the chain is Cytoplasmic. A helical transmembrane segment spans residues Thr410–Pro428. Over Tyr429–Gln440 the chain is Extracellular. The helical transmembrane segment at Met441–Asn463 threads the bilayer. Over Gly464 to Met591 the chain is Cytoplasmic. Residues Trp474 to Trp477 carry the Important for interaction with G proteins motif. Residues Leu516 to Thr544 form a disordered region.

It belongs to the G-protein coupled receptor 2 family. In terms of assembly, homodimer in the absence of bound ligand. Peptide hormone binding leads to dissociation of the homodimer. N-glycosylated.

Its subcellular location is the cell membrane. Functionally, G-protein-coupled receptor for parathyroid hormone (PTH) and for parathyroid hormone-related peptide (PTHLH). Ligand binding causes a conformation change that triggers signaling via guanine nucleotide-binding proteins (G proteins) and modulates the activity of downstream effectors, such as adenylate cyclase (cAMP). PTH1R is coupled to G(s) G alpha proteins and mediates activation of adenylate cyclase activity. PTHLH dissociates from PTH1R more rapidly than PTH; as consequence, the cAMP response induced by PTHLH decays faster than the response induced by PTH. In Rattus norvegicus (Rat), this protein is Parathyroid hormone/parathyroid hormone-related peptide receptor (Pth1r).